The following is a 196-amino-acid chain: NADH-quinone oxidoreductase subunit B (196 aa).

Residues cysteine 63, cysteine 64, cysteine 129, and cysteine 159 each contribute to the [4Fe-4S] cluster site.

The protein belongs to the complex I 20 kDa subunit family. In terms of assembly, NDH-1 is composed of 14 different subunits. Subunits NuoB, C, D, E, F, and G constitute the peripheral sector of the complex. [4Fe-4S] cluster serves as cofactor.

It localises to the cell inner membrane. The enzyme catalyses a quinone + NADH + 5 H(+)(in) = a quinol + NAD(+) + 4 H(+)(out). NDH-1 shuttles electrons from NADH, via FMN and iron-sulfur (Fe-S) centers, to quinones in the respiratory chain. The immediate electron acceptor for the enzyme in this species is believed to be a menaquinone. Couples the redox reaction to proton translocation (for every two electrons transferred, four hydrogen ions are translocated across the cytoplasmic membrane), and thus conserves the redox energy in a proton gradient. The sequence is that of NADH-quinone oxidoreductase subunit B from Bacteroides fragilis (strain ATCC 25285 / DSM 2151 / CCUG 4856 / JCM 11019 / LMG 10263 / NCTC 9343 / Onslow / VPI 2553 / EN-2).